The chain runs to 345 residues: Dihydroorotase (345 aa).

Positions 13 and 15 each coordinate Zn(2+). Substrate is bound by residues 15–17 (HFR) and asparagine 41. 3 residues coordinate Zn(2+): lysine 98, histidine 135, and histidine 173. At lysine 98 the chain carries N6-carboxylysine. Histidine 135 contacts substrate. Leucine 218 serves as a coordination point for substrate. Aspartate 246 lines the Zn(2+) pocket. Residue aspartate 246 is part of the active site. Positions 250 and 262 each coordinate substrate.

It belongs to the metallo-dependent hydrolases superfamily. DHOase family. Class II DHOase subfamily. Homodimer. Zn(2+) serves as cofactor.

It catalyses the reaction (S)-dihydroorotate + H2O = N-carbamoyl-L-aspartate + H(+). It functions in the pathway pyrimidine metabolism; UMP biosynthesis via de novo pathway; (S)-dihydroorotate from bicarbonate: step 3/3. Functionally, catalyzes the reversible cyclization of carbamoyl aspartate to dihydroorotate. The polypeptide is Dihydroorotase (Shewanella frigidimarina (strain NCIMB 400)).